Reading from the N-terminus, the 629-residue chain is Phosphomethylpyrimidine synthase (629 aa).

The segment at 1-20 (MSTTLKNAAHLSESAQVDSG) is disordered. Substrate contacts are provided by residues N233, M262, Y291, H327, 347 to 349 (SRG), 388 to 391 (DGLR), and E427. H431 lines the Zn(2+) pocket. Residue Y454 coordinates substrate. H495 contacts Zn(2+). Positions 575, 578, and 583 each coordinate [4Fe-4S] cluster.

This sequence belongs to the ThiC family. Homodimer. It depends on [4Fe-4S] cluster as a cofactor.

It carries out the reaction 5-amino-1-(5-phospho-beta-D-ribosyl)imidazole + S-adenosyl-L-methionine = 4-amino-2-methyl-5-(phosphooxymethyl)pyrimidine + CO + 5'-deoxyadenosine + formate + L-methionine + 3 H(+). It participates in cofactor biosynthesis; thiamine diphosphate biosynthesis. Catalyzes the synthesis of the hydroxymethylpyrimidine phosphate (HMP-P) moiety of thiamine from aminoimidazole ribotide (AIR) in a radical S-adenosyl-L-methionine (SAM)-dependent reaction. The polypeptide is Phosphomethylpyrimidine synthase (Pseudomonas savastanoi pv. phaseolicola (strain 1448A / Race 6) (Pseudomonas syringae pv. phaseolicola (strain 1448A / Race 6))).